The sequence spans 1755 residues: MESQQLSQHSHISHGSACASVTSKEVHTNQDPLDVSASKIQEYDKASTKANSQQTTTPASSAVPENPHHASPQPASVPPPQNGPYPQQCMMTQNQANPSGWSFYGHPSMIPYTPYQMSPMYFPPGPQSQFPQYPSSVGTPLSTPSPESGNTFTDSSSADSDMTSTKKYVRPPPMLTSPNDFPNWVKTYIKFLQNSNLGGIIPTVNGKPVRQITDDELTFLYNTFQIFAPSQFLPTWVKDILSVDYTDIMKILSKSIEKMQSDTQEANDIVTLANLQYNGSTPADAFETKVTNIIDRLNNNGIHINNKVACQLIMRGLSGEYKFLRYTRHRHLNMTVAELFLDIHAIYEEQQGSRNSKPNYRRNPSDEKNDSRSYTNTTKPKVIARNPQKTNNSKSKTARAHNVSTSNNSPSTDNDSISKSTTEPIQLNNKHDLHLGQELTESTVNHTNHSDDELPGHLLLDSGASRTLIRSAHHIHSASSNPGINVVDAQKRNIPINAIGDLQFHFQDNTKTSIKVLHTPNIAYDLLSLNELAAVDITACFTKNVLERSDGTVLAPIVKYGDFYWVSKKYLLPSNISVPTINNVHTSESTRKYPYPFIHRMLAHANAQTIRYSLKNNTITYFNESDVDWSSAIDYQCPDCLIGKSTKHRHIKGSRLKYQNSYEPFQYLHTDIFGPVHNLPNSAPSYFISFTDETTKFRWVYPLHDRREDSILDVFTTILAFIKNQFQASVLVIQMDRGSEYTNRTLHKFLEKNGITPCYTTTADSRAHGVAERLNRTLLDDCRTQLQCSGLPNHLWFSAIEFSTIVRNSLASPKSKKSARQHAGLAGLDISTLLPFGQPVIVNDHNPNSKIHPRGIPGYALHPSRNSYGYIIYLPSLKKTVDTTNYVILQGKESRLDQFNYDALTFDEDLNRLTASYHSFIASNEIQESNDLNIESDHDFQSDIELHPEQPRNVLSKAVSPTDSTPPSTHTEDSKRVSKTNIRAPREVDPNISESNILPSKKRSSTPQISNIESTGSGGMHKLNVPLLAPMSQSNTHESSHASKSKDFRHSDSYSENETNHTNVPISSTGGTNNKTVPQISDQETEKRIIHRSPSIDASPPENNSSHNIVPIKTPTTVSEQNTEESIIADLPLPDLPPESPTEFPDPFKELPPINSHQTNSSLGGIGDSNAYTTINSKKRSLEDNETEIKVSRDTWNTKNMRSLEPPRSKKRIHLIAAVKAVKSIKPIRTTLRYDEAITYNKDIKEKEKYIEAYHKEVNQLLKMNTWDTDKYYDRKEIDPKRVINSMFIFNRKRDGTHKARFVARGDIQHPDTYDSGMQSNTVHHYALMTSLSLALDNNYYITQLDISSAYLYADIKEELYIRPPPHLGMNDKLIRLKKSLYGLKQSGANWYETIKSYLIKQCGMEEVRGWSCVFKNSQVTICLFVDDMILFSKDLNANKKIITTLKKQYDTKIINLGESDNEIQYDILGLEIKYQRGKYMKLGMENSLTEKIPKLNVPLNPKGRKLSAPGQPGLYIDQDELEIDEDEYKEKVHEMQKLIGLASYVGYKFRFDLLYYINTLAQHILFPSRQVLDMTYELIQFMWDTRDKQLIWHKNKPTEPDNKLVAISDASYGNQPYYKSQIGNIFLLNGKVIGGKSTKASLTCTSTTEAEIHAVSEAIPLLNNLSHLVQELNKKPIIKGLLTDSRSTISIIKSTNEEKFRNRFFGTKAMRLRDEVSGNNLYVYYIETKKNIADVMTKPLPIKTFKLLTNKWIH.

Over residues 1–16 (MESQQLSQHSHISHGS) the composition is skewed to low complexity. Disordered regions lie at residues 1–93 (MESQ…MMTQ), 126–173 (PQSQ…RPPP), and 352–421 (GSRN…SKST). Composition is skewed to polar residues over residues 48-60 (TKAN…TPAS) and 127-152 (QSQF…GNTF). The segment covering 153–165 (TDSSSADSDMTST) has biased composition (low complexity). The interval 299 to 401 (NNGIHINNKV…NSKSKTARAH (103 aa)) is RNA-binding. A compositionally biased stretch (low complexity) spans 402–418 (NVSTSNNSPSTDNDSIS). S416 carries the phosphoserine modification. The For protease activity; shared with dimeric partner role is filled by D461. The interval 583–640 (NVHTSESTRKYPYPFIHRMLAHANAQTIRYSLKNNTITYFNESDVDWSSAIDYQCPDC) is integrase-type zinc finger-like. The Integrase catalytic domain occupies 660 to 835 (NSYEPFQYLH…AGLDISTLLP (176 aa)). Residues D671 and D736 each contribute to the Mg(2+) site. 3 disordered regions span residues 956 to 1087 (SKAV…ETEK), 1092 to 1111 (RSPS…NIVP), and 1130 to 1187 (DLPL…DNET). Residues 960-969 (SPTDSTPPST) show a composition bias toward low complexity. A compositionally biased stretch (polar residues) spans 1005 to 1015 (STPQISNIEST). Positions 1038-1053 (ESSHASKSKDFRHSDS) are enriched in basic and acidic residues. Composition is skewed to polar residues over residues 1054 to 1082 (YSEN…QISD) and 1101 to 1111 (PENNSSHNIVP). Residues 1178-1212 (KKRSLEDNETEIKVSRDTWNTKNMRSLEPPRSKKR) carry the Bipartite nuclear localization signal motif. One can recognise a Reverse transcriptase Ty1/copia-type domain in the interval 1338–1476 (NNYYITQLDI…DILGLEIKYQ (139 aa)). Residues D1346, D1427, D1428, D1610, E1652, and D1685 each contribute to the Mg(2+) site. The 143-residue stretch at 1610 to 1752 (DASYGNQPYY…IKTFKLLTNK (143 aa)) folds into the RNase H Ty1/copia-type domain.

The capsid protein forms a homotrimer, from which the VLPs are assembled. The protease is a homodimer, whose active site consists of two apposed aspartic acid residues. Post-translationally, initially, virus-like particles (VLPs) are composed of the structural unprocessed proteins Gag and Gag-Pol, and also contain the host initiator methionine tRNA (tRNA(i)-Met) which serves as a primer for minus-strand DNA synthesis, and a dimer of genomic Ty RNA. Processing of the polyproteins occurs within the particle and proceeds by an ordered pathway, called maturation. First, the protease (PR) is released by autocatalytic cleavage of the Gag-Pol polyprotein yielding capsid protein p45 and a Pol-p154 precursor protein. This cleavage is a prerequisite for subsequent processing of Pol-p154 at the remaining sites to release the mature structural and catalytic proteins. Maturation takes place prior to the RT reaction and is required to produce transposition-competent VLPs.

It is found in the cytoplasm. The protein resides in the nucleus. It carries out the reaction DNA(n) + a 2'-deoxyribonucleoside 5'-triphosphate = DNA(n+1) + diphosphate. It catalyses the reaction Endonucleolytic cleavage to 5'-phosphomonoester.. Capsid protein (CA) is the structural component of the virus-like particle (VLP), forming the shell that encapsulates the retrotransposons dimeric RNA genome. The particles are assembled from trimer-clustered units and there are holes in the capsid shells that allow for the diffusion of macromolecules. CA also has nucleocapsid-like chaperone activity, promoting primer tRNA(i)-Met annealing to the multipartite primer-binding site (PBS), dimerization of Ty1 RNA and initiation of reverse transcription. Functionally, the aspartyl protease (PR) mediates the proteolytic cleavages of the Gag and Gag-Pol polyproteins after assembly of the VLP. Its function is as follows. Reverse transcriptase/ribonuclease H (RT) is a multifunctional enzyme that catalyzes the conversion of the retro-elements RNA genome into dsDNA within the VLP. The enzyme displays a DNA polymerase activity that can copy either DNA or RNA templates, and a ribonuclease H (RNase H) activity that cleaves the RNA strand of RNA-DNA heteroduplexes during plus-strand synthesis and hydrolyzes RNA primers. The conversion leads to a linear dsDNA copy of the retrotransposon that includes long terminal repeats (LTRs) at both ends. In terms of biological role, integrase (IN) targets the VLP to the nucleus, where a subparticle preintegration complex (PIC) containing at least integrase and the newly synthesized dsDNA copy of the retrotransposon must transit the nuclear membrane. Once in the nucleus, integrase performs the integration of the dsDNA into the host genome. The protein is Transposon Ty1-GR2 Gag-Pol polyprotein (TY1B-GR2) of Saccharomyces cerevisiae (strain ATCC 204508 / S288c) (Baker's yeast).